A 565-amino-acid polypeptide reads, in one-letter code: NAD-dependent malic enzyme (565 aa).

Tyrosine 104 acts as the Proton donor in catalysis. Residue arginine 157 coordinates NAD(+). The Proton acceptor role is filled by lysine 175. The a divalent metal cation site is built by glutamate 246, aspartate 247, and aspartate 270. NAD(+) contacts are provided by aspartate 270 and asparagine 418.

It belongs to the malic enzymes family. Homotetramer. Requires Mg(2+) as cofactor. The cofactor is Mn(2+).

It catalyses the reaction (S)-malate + NAD(+) = pyruvate + CO2 + NADH. It carries out the reaction oxaloacetate + H(+) = pyruvate + CO2. The polypeptide is NAD-dependent malic enzyme (Escherichia coli O127:H6 (strain E2348/69 / EPEC)).